Reading from the N-terminus, the 411-residue chain is Adenylosuccinate synthetase (411 aa).

GTP-binding positions include 11–17 (GDEGKGK) and 39–41 (GHT). Residue aspartate 12 is the Proton acceptor of the active site. The Mg(2+) site is built by aspartate 12 and glycine 39. IMP contacts are provided by residues 12-15 (DEGK), 37-40 (NAGH), threonine 121, arginine 135, glutamine 215, threonine 230, and arginine 294. Residue histidine 40 is the Proton donor of the active site. 290 to 296 (TTTKRPR) serves as a coordination point for substrate. GTP-binding positions include arginine 296, 322–324 (KLD), and 400–402 (STS).

The protein belongs to the adenylosuccinate synthetase family. As to quaternary structure, homodimer. Mg(2+) serves as cofactor.

The protein localises to the cytoplasm. It catalyses the reaction IMP + L-aspartate + GTP = N(6)-(1,2-dicarboxyethyl)-AMP + GDP + phosphate + 2 H(+). It functions in the pathway purine metabolism; AMP biosynthesis via de novo pathway; AMP from IMP: step 1/2. Functionally, plays an important role in the de novo pathway of purine nucleotide biosynthesis. Catalyzes the first committed step in the biosynthesis of AMP from IMP. The protein is Adenylosuccinate synthetase of Helicobacter pylori (strain G27).